The chain runs to 467 residues: Glutamate--tRNA ligase (467 aa).

The 'HIGH' region motif lies at 9–19 (PSPTGYLHIGG). Residues 237-241 (KLSKR) carry the 'KMSKS' region motif. K240 contributes to the ATP binding site.

The protein belongs to the class-I aminoacyl-tRNA synthetase family. Glutamate--tRNA ligase type 1 subfamily. As to quaternary structure, monomer.

The protein localises to the cytoplasm. The enzyme catalyses tRNA(Glu) + L-glutamate + ATP = L-glutamyl-tRNA(Glu) + AMP + diphosphate. Functionally, catalyzes the attachment of glutamate to tRNA(Glu) in a two-step reaction: glutamate is first activated by ATP to form Glu-AMP and then transferred to the acceptor end of tRNA(Glu). The chain is Glutamate--tRNA ligase from Xylella fastidiosa (strain 9a5c).